A 182-amino-acid polypeptide reads, in one-letter code: NADH-ubiquinone oxidoreductase 20 kDa subunit (182 aa).

4 residues coordinate [4Fe-4S] cluster: Cys-57, Cys-58, Cys-122, and Cys-152.

Belongs to the complex I 20 kDa subunit family. [4Fe-4S] cluster serves as cofactor.

Its subcellular location is the mitochondrion. It catalyses the reaction a ubiquinone + NADH + 5 H(+)(in) = a ubiquinol + NAD(+) + 4 H(+)(out). The polypeptide is NADH-ubiquinone oxidoreductase 20 kDa subunit (NAD10) (Reclinomonas americana).